The sequence spans 666 residues: Protein OPG074 (666 aa).

The helical transmembrane segment at 574-596 (VVIFFNTIIEYIIATIYYRLTVL) threads the bilayer.

This sequence belongs to the orthopoxvirus OPG074 family.

The protein resides in the membrane. The polypeptide is Protein OPG074 (OPG074) (Vaccinia virus (strain Western Reserve) (VACV)).